Reading from the N-terminus, the 110-residue chain is Red pigment-concentrating prohormone (110 aa).

A signal peptide spans 1-25 (MVRRTGVTLLVVALVVVALVSSVSA). Gln26 bears the Pyrrolidone carboxylic acid mark. The residue at position 33 (Trp33) is a Tryptophan amide.

The protein belongs to the AKH/HRTH/RPCH family.

The protein resides in the secreted. In terms of biological role, this hormone adapts the animal to light backgrounds by stimulating concentration of the pigment of its red body-chromatophores. This chain is Red pigment-concentrating prohormone, found in Carcinus maenas (Common shore crab).